We begin with the raw amino-acid sequence, 200 residues long: Small ribosomal subunit protein uS4 (200 aa).

The disordered stretch occupies residues 22–42 (TGKELEKRPYAPGPHGPNQRK). The region spanning 92–152 (ARLDNLVYRM…EKSNNLVVVK (61 aa)) is the S4 RNA-binding domain.

It belongs to the universal ribosomal protein uS4 family. As to quaternary structure, part of the 30S ribosomal subunit. Contacts protein S5. The interaction surface between S4 and S5 is involved in control of translational fidelity.

One of the primary rRNA binding proteins, it binds directly to 16S rRNA where it nucleates assembly of the body of the 30S subunit. Functionally, with S5 and S12 plays an important role in translational accuracy. The chain is Small ribosomal subunit protein uS4 from Bacillus cereus (strain Q1).